The primary structure comprises 100 residues: Dromyosuppressin (100 aa).

An N-terminal signal peptide occupies residues 1-24 (MSFAQFFVACCLAIVLLAVSNTRA). Positions 25–84 (AVQGPPLCQSGIVEEMPPHIRKVCQALENSDQLTSALKSYINNEASALVANSDDLLKNYN) are excised as a propeptide. Residue Phe96 is modified to Phenylalanine amide.

This sequence belongs to the myosuppressin family.

The protein resides in the secreted. In terms of biological role, myoinhibiting neuropeptide. The sequence is that of Dromyosuppressin from Drosophila melanogaster (Fruit fly).